We begin with the raw amino-acid sequence, 564 residues long: Aspyridones efflux protein (564 aa).

Positions 1-17 are enriched in low complexity; the sequence is MHPDQADTAAMQQQTTT. Residues 1-49 are disordered; that stretch reads MHPDQADTAAMQQQTTTECSDRSRPEKAEEGHAREHTVTRTCSREPEQT. Positions 19 to 47 are enriched in basic and acidic residues; that stretch reads CSDRSRPEKAEEGHAREHTVTRTCSREPE. The next 10 membrane-spanning stretches (helical) occupy residues 66–86, 127–147, 158–178, 185–205, 216–236, 260–280, 287–307, 335–355, 368–388, and 392–412; these read AICL…TAIP, WTFL…ATAP, IAGC…THSV, LFMA…PPLG, WCFW…VFLF, VGTL…QWGG, SGIV…FGIV, FALG…FQGV, LPML…VTII, and APFM…LLLF. Asn415 is a glycosylation site (N-linked (GlcNAc...) asparagine). The next 2 helical transmembrane spans lie at 416-436 and 454-474; these read VTAA…GFGW and IATA…VSVA. Asn524 carries N-linked (GlcNAc...) asparagine glycosylation. Residues 528-548 traverse the membrane as a helical segment; the sequence is LSAFFVATIMAIMSLVGCTFV.

It belongs to the major facilitator superfamily. TCR/Tet family.

Its subcellular location is the cell membrane. Its function is as follows. Efflux pump that may be involved in the secretion of leporins. This is Aspyridones efflux protein (TP) from Neocamarosporium betae (Beet black rot fungus).